A 326-amino-acid polypeptide reads, in one-letter code: BTB/POZ domain-containing protein At1g21780 (326 aa).

Positions 161–228 constitute a BTB domain; the sequence is TDVIIHTADG…LYGNITQEEF (68 aa).

Homodimer. Interacts with CUL3A and CUL3B.

It functions in the pathway protein modification; protein ubiquitination. In terms of biological role, may act as a substrate-specific adapter of an E3 ubiquitin-protein ligase complex (CUL3-RBX1-BTB) which mediates the ubiquitination and subsequent proteasomal degradation of target proteins. This is BTB/POZ domain-containing protein At1g21780 from Arabidopsis thaliana (Mouse-ear cress).